The following is a 327-amino-acid chain: Inactive peptidyl-prolyl cis-trans isomerase FKBP6 (327 aa).

Positions 54–143 (DASVLVKYSG…LFEIELLDFL (90 aa)) constitute a PPIase FKBP-type domain. TPR repeat units follow at residues 171-204 (AATE…LRRR), 219-252 (LPVL…DQKN), and 253-286 (AKAL…QPFN).

The protein belongs to the FKBP6 family. Interacts (via TPR repeats) with HSP90. Interacts with HSP72/HSPA2 and CLTC. Interacts with GAPDH; leading to inhibit GAPDH catalytic activity. In terms of tissue distribution, detected in all tissues examined, with higher expression in testis, heart, skeletal muscle, liver, and kidney.

The protein resides in the cytoplasm. The protein localises to the nucleus. Its function is as follows. Has an essential role in spermatogenesis. It is required to repress transposable elements and prevent their mobilization, which is essential for the germline integrity. Acts via the piRNA metabolic process, which mediates the repression of transposable elements during meiosis by forming complexes composed of piRNAs and Piwi proteins and govern the methylation and subsequent repression of transposons. Acts as a co-chaperone via its interaction with HSP90 and is required for the piRNA amplification process, the secondary piRNA biogenesis. May be required together with HSP90 in removal of 16 nucleotide ping-pong by-products from Piwi complexes, possibly facilitating turnover of Piwi complexes. In Homo sapiens (Human), this protein is Inactive peptidyl-prolyl cis-trans isomerase FKBP6 (FKBP6).